Reading from the N-terminus, the 198-residue chain is Superoxide dismutase [Mn], mitochondrial (198 aa).

Histidine 26 provides a ligand contact to Mn(2+). Tyrosine 34 is subject to 3'-nitrotyrosine. An N6-acetyllysine; alternate mark is found at lysine 44 and lysine 51. N6-succinyllysine; alternate occurs at positions 44 and 51. Position 74 (histidine 74) interacts with Mn(2+). Lysine 90 is subject to N6-acetyllysine. N6-acetyllysine; alternate occurs at positions 98 and 106. Lysine 98 and lysine 106 each carry N6-succinyllysine; alternate. Residues aspartate 159 and histidine 163 each contribute to the Mn(2+) site. Position 178 is an N6-acetyllysine (lysine 178).

It belongs to the iron/manganese superoxide dismutase family. Homotetramer. It depends on Mn(2+) as a cofactor. Post-translationally, nitrated under oxidative stress. Nitration coupled with oxidation inhibits the catalytic activity. In terms of processing, acetylation at Lys-98 decreases enzymatic activity. Deacetylated by SIRT3 upon exposure to ionizing radiations or after long fasting. Polyubiquitinated; leading to proteasomal degradation. Deubiquitinated by USP36 which increases protein stability.

Its subcellular location is the mitochondrion matrix. The catalysed reaction is 2 superoxide + 2 H(+) = H2O2 + O2. In terms of biological role, destroys superoxide anion radicals which are normally produced within the cells and which are toxic to biological systems. The polypeptide is Superoxide dismutase [Mn], mitochondrial (SOD2) (Pan troglodytes (Chimpanzee)).